The chain runs to 338 residues: Methionine import ATP-binding protein MetN 2 (338 aa).

The 241-residue stretch at 2-242 folds into the ABC transporter domain; sequence IQLEGVSVDF…PQHAFTRQLV (241 aa). 39–46 is a binding site for ATP; it reads GTSGAGKS.

This sequence belongs to the ABC transporter superfamily. Methionine importer (TC 3.A.1.24) family. As to quaternary structure, the complex is composed of two ATP-binding proteins (MetN), two transmembrane proteins (MetI) and a solute-binding protein (MetQ).

It localises to the cell inner membrane. The enzyme catalyses L-methionine(out) + ATP + H2O = L-methionine(in) + ADP + phosphate + H(+). It catalyses the reaction D-methionine(out) + ATP + H2O = D-methionine(in) + ADP + phosphate + H(+). Its function is as follows. Part of the ABC transporter complex MetNIQ involved in methionine import. Responsible for energy coupling to the transport system. The protein is Methionine import ATP-binding protein MetN 2 of Pectobacterium atrosepticum (strain SCRI 1043 / ATCC BAA-672) (Erwinia carotovora subsp. atroseptica).